A 447-amino-acid polypeptide reads, in one-letter code: Acid phosphatase (447 aa).

The first 17 residues, 1–17 (MKPSVATLLATVSLVYA), serve as a signal peptide directing secretion. N-linked (GlcNAc...) asparagine glycans are attached at residues N119, N150, N177, N186, and N208. D215 functions as the Proton donor in the catalytic mechanism. 7 N-linked (GlcNAc...) asparagine glycosylation sites follow: N217, N234, N240, N315, N332, N382, and N405. A lipid anchor (GPI-like-anchor amidated serine) is attached at S419. Positions 420-447 (ASSNAAVSAVAPAAGVSGLLLGLALNLL) are cleaved as a propeptide — removed in mature form.

In terms of processing, the GPI-like anchor contains a phosphoceramide lipid group. The anchor position has not been determined.

It localises to the cell membrane. The enzyme catalyses a phosphate monoester + H2O = an alcohol + phosphate. With respect to regulation, inhibited by NaF, molybdate and vanadate. Functionally, has both phosphomonoesterase and phosphodiesterase activity. Cleaves a broad range of phosphate esters. The chain is Acid phosphatase (phoA) from Aspergillus fumigatus (strain ATCC MYA-4609 / CBS 101355 / FGSC A1100 / Af293) (Neosartorya fumigata).